A 341-amino-acid polypeptide reads, in one-letter code: Dimethylsulfoniopropionate lyase 7 (341 aa).

2 stretches are compositionally biased toward basic and acidic residues: residues methionine 1–glutamate 10 and glutamate 319–lysine 328. Disordered stretches follow at residues methionine 1–phenylalanine 24 and glutamate 319–alanine 341.

The protein belongs to the aspartate/glutamate racemases family. ALMA1 subfamily. As to quaternary structure, homotetramer.

It carries out the reaction S,S-dimethyl-beta-propiothetin = acrylate + dimethyl sulfide + H(+). Its function is as follows. Mediates cleavage of dimethylsulfoniopropionate (DMSP) into dimethyl sulfide (DMS) and acrylate. DMS is the principal form by which sulfur is transported from oceans to the atmosphere and is a key component of the ocean sulfur cycle. The sequence is that of Dimethylsulfoniopropionate lyase 7 from Emiliania huxleyi (strain CCMP1516).